The primary structure comprises 435 residues: 5-methylthioadenosine/S-adenosylhomocysteine deaminase (435 aa).

Zn(2+) is bound by residues His-65 and His-67. Residues Glu-94, Arg-150, and His-189 each coordinate substrate. His-216 contributes to the Zn(2+) binding site. 2 residues coordinate substrate: Glu-219 and Asp-304. Position 304 (Asp-304) interacts with Zn(2+).

It belongs to the metallo-dependent hydrolases superfamily. MTA/SAH deaminase family. Requires Zn(2+) as cofactor.

The enzyme catalyses S-adenosyl-L-homocysteine + H2O + H(+) = S-inosyl-L-homocysteine + NH4(+). The catalysed reaction is S-methyl-5'-thioadenosine + H2O + H(+) = S-methyl-5'-thioinosine + NH4(+). In terms of biological role, catalyzes the deamination of 5-methylthioadenosine and S-adenosyl-L-homocysteine into 5-methylthioinosine and S-inosyl-L-homocysteine, respectively. Is also able to deaminate adenosine. The chain is 5-methylthioadenosine/S-adenosylhomocysteine deaminase from Bacillus cereus (strain B4264).